A 441-amino-acid chain; its full sequence is GTPase Der (441 aa).

EngA-type G domains are found at residues 3–167 (PLIA…PNKT) and 176–351 (TRIA…EQFA). Residues 9–16 (GRPNVGKS), 56–60 (DTGGF), 119–122 (NKID), 182–189 (GRPNVGKS), 229–233 (DTAGI), and 294–297 (NKWD) contribute to the GTP site. The 85-residue stretch at 352–436 (KRISTSDLNR…PMRLLFKGRE (85 aa)) folds into the KH-like domain.

Belongs to the TRAFAC class TrmE-Era-EngA-EngB-Septin-like GTPase superfamily. EngA (Der) GTPase family. Associates with the 50S ribosomal subunit.

Functionally, GTPase that plays an essential role in the late steps of ribosome biogenesis. This is GTPase Der from Geotalea daltonii (strain DSM 22248 / JCM 15807 / FRC-32) (Geobacter daltonii).